Reading from the N-terminus, the 688-residue chain is Phosphoinositide 3-phosphatase (688 aa).

Residues S155–Y637 form the Myotubularin phosphatase domain. C397 acts as the Phosphocysteine intermediate in catalysis. Positions E647 to N668 are enriched in basic and acidic residues. The disordered stretch occupies residues E647–G672.

Belongs to the protein-tyrosine phosphatase family. Non-receptor class myotubularin subfamily.

The protein resides in the cytoplasm. It catalyses the reaction a 1,2-diacyl-sn-glycero-3-phospho-(1D-myo-inositol-3-phosphate) + H2O = a 1,2-diacyl-sn-glycero-3-phospho-(1D-myo-inositol) + phosphate. Functionally, lipid phosphatase which dephosphorylates phosphatidylinositol 3-monophosphate (PI3P). Involved in the control of PI3P-dependent signaling and in the maintenance of endosomal system integrity. This is Phosphoinositide 3-phosphatase from Saccharomyces cerevisiae (strain ATCC 204508 / S288c) (Baker's yeast).